The chain runs to 1502 residues: Vacuolar protein sorting/targeting protein 10 (1502 aa).

The first 29 residues, 1–29 (MIRQCLHLTTSPLLLLLLIALSSIGTVVA), serve as a signal peptide directing secretion. At 30-1369 (KSDGPKIASI…EYQRKHGPSG (1340 aa)) the chain is on the lumenal side. BNR repeat units lie at residues 68-78 (YQSFDGGVEWK) and 120-130 (WVTTDQGKTWR). Residues asparagine 314 and asparagine 339 are each glycosylated (N-linked (GlcNAc...) asparagine). BNR repeat units lie at residues 395–404 (ISFDDGRTFQ), 456–466 (YVSDDAGVTWR), 498–508 (QYSINHGKDWE), and 740–750 (YVTHDHGKSWT). N-linked (GlcNAc...) asparagine glycosylation is present at asparagine 985. BNR repeat units follow at residues 1119-1129 (FFSSDGGISWK) and 1160-1171 (YFSTDEGDTWEK). Asparagine 1280 carries an N-linked (GlcNAc...) asparagine glycan. The chain crosses the membrane as a helical span at residues 1370–1390 (AVIFFAIIVPITIAVAAGYWV). Residues 1391–1422 (YTRWDGKFGQIRLGDGGAQSFVTSRGDSPFIT) are Cytoplasmic-facing. The chain crosses the membrane as a helical span at residues 1423 to 1443 (IPVAIIAGTVAAVKVLPLLVM). Residues 1444–1502 (SLWRSVTGYVRIPGRRGPRPYATRDAFAARRGDYTHVVDDEDELLGDDEFEDEEGDERN) lie on the Lumenal side of the membrane.

This sequence belongs to the VPS10-related sortilin family.

Its subcellular location is the golgi apparatus. It is found in the trans-Golgi network membrane. The protein resides in the prevacuolar compartment membrane. In terms of biological role, functions as a sorting receptor in the Golgi compartment required for the intracellular sorting and delivery of soluble vacuolar proteins, like carboxypeptidase Y (CPY) and proteinase A. Executes multiple rounds of sorting by cycling between the late Golgi and a prevacuolar endosome-like compartment. The polypeptide is Vacuolar protein sorting/targeting protein 10 (vps10) (Talaromyces stipitatus (strain ATCC 10500 / CBS 375.48 / QM 6759 / NRRL 1006) (Penicillium stipitatum)).